The chain runs to 611 residues: Inhibitor of apoptosis protein (611 aa).

BIR repeat units follow at residues Glu30–Val97, Glu176–Val242, and His262–Leu329. 4 residues coordinate Zn(2+): Cys299, Cys302, His319, and Cys326. The CARD domain occupies Val446 to Lys536. Residues Cys564–Arg599 form an RING-type zinc finger.

It belongs to the IAP family. Cells of the T-lymphocyte lineage. Found in both cortical and medullary cells of the thymus. Expressed at relatively high levels also in spleen, bursa, intestine and lung and at very low levels in testis, brain and skeletal muscle.

It localises to the nucleus. Its subcellular location is the cytoplasm. Functionally, apoptotic suppressor. The protein is Inhibitor of apoptosis protein (ITA) of Gallus gallus (Chicken).